The sequence spans 154 residues: NADPH-dependent 7-cyano-7-deazaguanine reductase (154 aa).

Residues 1-21 (MPNTDVSSLSMLGHQTETASS) show a composition bias toward polar residues. Positions 1-26 (MPNTDVSSLSMLGHQTETASSPEEAV) are disordered. Cysteine 52 functions as the Thioimide intermediate in the catalytic mechanism. Catalysis depends on aspartate 59, which acts as the Proton donor. Substrate-binding positions include 74–76 (VES) and 93–94 (HE).

It belongs to the GTP cyclohydrolase I family. QueF type 1 subfamily.

The protein resides in the cytoplasm. It catalyses the reaction 7-aminomethyl-7-carbaguanine + 2 NADP(+) = 7-cyano-7-deazaguanine + 2 NADPH + 3 H(+). It functions in the pathway tRNA modification; tRNA-queuosine biosynthesis. Its function is as follows. Catalyzes the NADPH-dependent reduction of 7-cyano-7-deazaguanine (preQ0) to 7-aminomethyl-7-deazaguanine (preQ1). This is NADPH-dependent 7-cyano-7-deazaguanine reductase from Rhizobium etli (strain ATCC 51251 / DSM 11541 / JCM 21823 / NBRC 15573 / CFN 42).